The following is a 190-amino-acid chain: Cell division protein SepF (190 aa).

Belongs to the SepF family. Homodimer. Interacts with FtsZ.

It is found in the cytoplasm. Cell division protein that is part of the divisome complex and is recruited early to the Z-ring. Probably stimulates Z-ring formation, perhaps through the cross-linking of FtsZ protofilaments. Its function overlaps with FtsA. This Synechococcus sp. (strain WH7803) protein is Cell division protein SepF.